The primary structure comprises 258 residues: Acyl-[acyl-carrier-protein]--UDP-N-acetylglucosamine O-acyltransferase (258 aa).

The protein belongs to the transferase hexapeptide repeat family. LpxA subfamily. In terms of assembly, homotrimer.

The protein localises to the cytoplasm. It catalyses the reaction a (3R)-hydroxyacyl-[ACP] + UDP-N-acetyl-alpha-D-glucosamine = a UDP-3-O-[(3R)-3-hydroxyacyl]-N-acetyl-alpha-D-glucosamine + holo-[ACP]. It participates in glycolipid biosynthesis; lipid IV(A) biosynthesis; lipid IV(A) from (3R)-3-hydroxytetradecanoyl-[acyl-carrier-protein] and UDP-N-acetyl-alpha-D-glucosamine: step 1/6. Involved in the biosynthesis of lipid A, a phosphorylated glycolipid that anchors the lipopolysaccharide to the outer membrane of the cell. This chain is Acyl-[acyl-carrier-protein]--UDP-N-acetylglucosamine O-acyltransferase, found in Pseudomonas syringae pv. tomato (strain ATCC BAA-871 / DC3000).